The primary structure comprises 528 residues: Glucose-6-phosphate isomerase (528 aa).

Residue Glu-322 is the Proton donor of the active site. Catalysis depends on residues His-351 and Lys-455.

This sequence belongs to the GPI family.

It localises to the cytoplasm. It catalyses the reaction alpha-D-glucose 6-phosphate = beta-D-fructose 6-phosphate. It functions in the pathway carbohydrate biosynthesis; gluconeogenesis. It participates in carbohydrate degradation; glycolysis; D-glyceraldehyde 3-phosphate and glycerone phosphate from D-glucose: step 2/4. Catalyzes the reversible isomerization of glucose-6-phosphate to fructose-6-phosphate. In Nostoc punctiforme (strain ATCC 29133 / PCC 73102), this protein is Glucose-6-phosphate isomerase.